We begin with the raw amino-acid sequence, 589 residues long: Splicing factor U2af large subunit B (589 aa).

Residues 1–195 (MMSYEGNGDG…KRRSGFDMAP (195 aa)) form a disordered region. Over residues 14–27 (STENHNENYISLES) the composition is skewed to polar residues. 2 stretches are compositionally biased toward basic and acidic residues: residues 29-100 (PFHE…DRQR) and 109-145 (RDRS…DREV). Composition is skewed to basic residues over residues 146–156 (RHRRRSRSRSR) and 164–188 (RSEH…SKRR). 3 RRM domains span residues 255–338 (RRVY…RPTD), 375–453 (DRIF…RAIQ), and 494–580 (QVVT…YPED).

Belongs to the splicing factor SR family. Component of the spliceosome. Interacts with SF1 in the nucleus.

The protein localises to the nucleus. It localises to the nucleus speckle. In terms of biological role, necessary for the splicing of pre-mRNA. This Arabidopsis thaliana (Mouse-ear cress) protein is Splicing factor U2af large subunit B.